The primary structure comprises 83 residues: Cytochrome b559 subunit alpha (83 aa).

Residues 21-35 traverse the membrane as a helical segment; that stretch reads VIHSITIPSLFIAGW. His-23 provides a ligand contact to heme.

This sequence belongs to the PsbE/PsbF family. In terms of assembly, heterodimer of an alpha subunit and a beta subunit. PSII is composed of 1 copy each of membrane proteins PsbA, PsbB, PsbC, PsbD, PsbE, PsbF, PsbH, PsbI, PsbJ, PsbK, PsbL, PsbM, PsbT, PsbX, PsbY, PsbZ, Psb30/Ycf12, at least 3 peripheral proteins of the oxygen-evolving complex and a large number of cofactors. It forms dimeric complexes. Heme b serves as cofactor.

It is found in the plastid. The protein resides in the chloroplast thylakoid membrane. Functionally, this b-type cytochrome is tightly associated with the reaction center of photosystem II (PSII). PSII is a light-driven water:plastoquinone oxidoreductase that uses light energy to abstract electrons from H(2)O, generating O(2) and a proton gradient subsequently used for ATP formation. It consists of a core antenna complex that captures photons, and an electron transfer chain that converts photonic excitation into a charge separation. This chain is Cytochrome b559 subunit alpha, found in Amborella trichopoda.